A 469-amino-acid chain; its full sequence is Uronate isomerase (469 aa).

It belongs to the metallo-dependent hydrolases superfamily. Uronate isomerase family.

It carries out the reaction D-glucuronate = D-fructuronate. It catalyses the reaction aldehydo-D-galacturonate = keto-D-tagaturonate. It participates in carbohydrate metabolism; pentose and glucuronate interconversion. The polypeptide is Uronate isomerase (Yersinia pseudotuberculosis serotype O:1b (strain IP 31758)).